A 328-amino-acid chain; its full sequence is Arylacetonitrilase (328 aa).

The region spanning 5-278 (VRVAVTQAEP…EGIIYADLDL (274 aa)) is the CN hydrolase domain. Residue glutamate 45 is the Proton acceptor of the active site. The active site involves lysine 125. Catalysis depends on cysteine 160, which acts as the Nucleophile.

It belongs to the carbon-nitrogen hydrolase superfamily. Nitrilase family.

It carries out the reaction a nitrile + 2 H2O = a carboxylate + NH4(+). It catalyses the reaction 4-chlorophenylacetonitrile + 2 H2O = 4-chlorophenylacetate + NH4(+). Functionally, nitrilase that hydrolyzes preferentially phenylacetonitrile and (R,S)-mandelonitrile. Also acts on dinitriles like phenylenediacetonitriles (PDAs) 1,2-PDA, 1,3-PDA, and 1,4-PDA, and cyanophenyl acetonitriles (CPAs) 2-CPA and 4-CPA. This Aspergillus kawachii (strain NBRC 4308) (White koji mold) protein is Arylacetonitrilase (nit2).